A 254-amino-acid chain; its full sequence is 3-oxo-5-alpha-steroid 4-dehydrogenase 2 (254 aa).

4 helical membrane passes run 8–28 (SPVL…LYFA), 72–92 (PRSL…AHYF), 146–166 (FSLG…SDYI), and 206–226 (LATW…FLGL).

It belongs to the steroid 5-alpha reductase family.

The protein localises to the microsome membrane. The protein resides in the endoplasmic reticulum membrane. It carries out the reaction a 3-oxo-5alpha-steroid + NADP(+) = a 3-oxo-Delta(4)-steroid + NADPH + H(+). The catalysed reaction is 17beta-hydroxy-5alpha-androstan-3-one + NADP(+) = testosterone + NADPH + H(+). The enzyme catalyses 5alpha-pregnane-3,20-dione + NADP(+) = progesterone + NADPH + H(+). Functionally, converts testosterone (T) into 5-alpha-dihydrotestosterone (DHT) and progesterone or corticosterone into their corresponding 5-alpha-3-oxosteroids. It plays a central role in sexual differentiation and androgen physiology. This Sus scrofa (Pig) protein is 3-oxo-5-alpha-steroid 4-dehydrogenase 2 (SRD5A2).